Here is a 294-residue protein sequence, read N- to C-terminus: 33 kDa chaperonin (294 aa).

Intrachain disulfides connect cysteine 239–cysteine 241 and cysteine 272–cysteine 275.

It belongs to the HSP33 family. Post-translationally, under oxidizing conditions two disulfide bonds are formed involving the reactive cysteines. Under reducing conditions zinc is bound to the reactive cysteines and the protein is inactive.

It localises to the cytoplasm. Its function is as follows. Redox regulated molecular chaperone. Protects both thermally unfolding and oxidatively damaged proteins from irreversible aggregation. Plays an important role in the bacterial defense system toward oxidative stress. This chain is 33 kDa chaperonin, found in Listeria monocytogenes serotype 4b (strain CLIP80459).